The chain runs to 158 residues: Non-secretory ribonuclease (158 aa).

The first 27 residues, 1-27 (MVPKLFTSQICLLPLLGLLSAEGSPHA), serve as a signal peptide directing secretion. The Proton acceptor role is filled by histidine 42. Residue tyrosine 60 is modified to 3'-nitrotyrosine. 65–69 (KNKNT) contributes to the substrate binding site. N-linked (GlcNAc...) asparagine glycosylation is found at asparagine 86, asparagine 92, and asparagine 111. Histidine 153 acts as the Proton donor in catalysis.

It belongs to the pancreatic ribonuclease family. As to quaternary structure, interacts with and forms a tight 1:1 complex with RNH1. Dimerization of two such complexes may occur.

It localises to the lysosome. Its subcellular location is the cytoplasmic granule. It carries out the reaction an [RNA] containing cytidine + H2O = an [RNA]-3'-cytidine-3'-phosphate + a 5'-hydroxy-ribonucleotide-3'-[RNA].. The catalysed reaction is an [RNA] containing uridine + H2O = an [RNA]-3'-uridine-3'-phosphate + a 5'-hydroxy-ribonucleotide-3'-[RNA].. This is a non-secretory ribonuclease. It is a pyrimidine specific nuclease with a slight preference for U. Cytotoxin and helminthotoxin. Possesses a wide variety of biological activities. The protein is Non-secretory ribonuclease (RNASE2) of Callithrix jacchus (White-tufted-ear marmoset).